A 486-amino-acid polypeptide reads, in one-letter code: Malonate-semialdehyde dehydrogenase (486 aa).

Positions 154, 178, 181, 182, and 231 each coordinate NAD(+). Catalysis depends on Cys-286, which acts as the Nucleophile. Residue Glu-386 coordinates NAD(+).

This sequence belongs to the aldehyde dehydrogenase family. IolA subfamily. Homotetramer.

It carries out the reaction 3-oxopropanoate + NAD(+) + CoA + H2O = hydrogencarbonate + acetyl-CoA + NADH + H(+). The enzyme catalyses 2-methyl-3-oxopropanoate + NAD(+) + CoA + H2O = propanoyl-CoA + hydrogencarbonate + NADH + H(+). It participates in polyol metabolism; myo-inositol degradation into acetyl-CoA; acetyl-CoA from myo-inositol: step 7/7. Its function is as follows. Catalyzes the oxidation of malonate semialdehyde (MSA) and methylmalonate semialdehyde (MMSA) into acetyl-CoA and propanoyl-CoA, respectively. Is involved in a myo-inositol catabolic pathway. Bicarbonate, and not CO2, is the end-product of the enzymatic reaction. This chain is Malonate-semialdehyde dehydrogenase, found in Bacillus cereus (strain B4264).